Consider the following 1342-residue polypeptide: DNA-directed RNA polymerase subunit beta (1342 aa).

The protein belongs to the RNA polymerase beta chain family. As to quaternary structure, the RNAP catalytic core consists of 2 alpha, 1 beta, 1 beta' and 1 omega subunit. When a sigma factor is associated with the core the holoenzyme is formed, which can initiate transcription.

It catalyses the reaction RNA(n) + a ribonucleoside 5'-triphosphate = RNA(n+1) + diphosphate. In terms of biological role, DNA-dependent RNA polymerase catalyzes the transcription of DNA into RNA using the four ribonucleoside triphosphates as substrates. The protein is DNA-directed RNA polymerase subunit beta of Buchnera aphidicola subsp. Schizaphis graminum (strain Sg).